The chain runs to 711 residues: Polyribonucleotide nucleotidyltransferase (711 aa).

Residues Asp-486 and Asp-492 each coordinate Mg(2+). The KH domain occupies 553–612; it reads PRIHTIKINPDKIKDVIGKGGSVIRALTEETGTTIEIEDDGTVKIAATDGEKAKHAIRRI. One can recognise an S1 motif domain in the interval 622-690; it reads GRVYTGKVTR…RQGRIRLSIK (69 aa). Residues 689-711 form a disordered region; the sequence is IKEATEQSQPAAAPEAPAAEQGE. Low complexity predominate over residues 694–711; the sequence is EQSQPAAAPEAPAAEQGE.

The protein belongs to the polyribonucleotide nucleotidyltransferase family. As to quaternary structure, component of the RNA degradosome, which is a multiprotein complex involved in RNA processing and mRNA degradation. Requires Mg(2+) as cofactor.

It localises to the cytoplasm. The enzyme catalyses RNA(n+1) + phosphate = RNA(n) + a ribonucleoside 5'-diphosphate. Functionally, involved in mRNA degradation. Catalyzes the phosphorolysis of single-stranded polyribonucleotides processively in the 3'- to 5'-direction. In Escherichia coli O8 (strain IAI1), this protein is Polyribonucleotide nucleotidyltransferase.